The following is a 417-amino-acid chain: MLEQMGKAAKQASWQLAVLSTAKKNQVLSVMADRLEANSEAILLANEQDMAQARATGMSEALLDRLLLTPARLAAIANDVRQVCRLNDPVGHVLDGNLLDSGLKLERRRVPLGVIGVIYEARPNVTIDVASLCLKTGNAVILRGGKETHNTNQATVKVIQQALEQCGLPAAAVQAIDSPDRALVNELLRLDRYVDMLIPRGGAGLHKLCREQSTIPVITGGIGVCHTYVDADVDFDKALTVIENAKIQRPSACNSLETLLVNRSIAAEFLPALSAKMAAAGVTLHAAENALPLLQGGPATVVPVNAEDYDDEWLSLDLNVLLVDDIDQAIDHIRTHGTNHSDAILTRSLSSAEHFVRAVDSSAVYVNASTRFTDGGQFGLGAEVAVSTQKLHARGPMGLDALTTYKWIGYGDDLVRS.

It belongs to the gamma-glutamyl phosphate reductase family.

The protein resides in the cytoplasm. It carries out the reaction L-glutamate 5-semialdehyde + phosphate + NADP(+) = L-glutamyl 5-phosphate + NADPH + H(+). It functions in the pathway amino-acid biosynthesis; L-proline biosynthesis; L-glutamate 5-semialdehyde from L-glutamate: step 2/2. Its function is as follows. Catalyzes the NADPH-dependent reduction of L-glutamate 5-phosphate into L-glutamate 5-semialdehyde and phosphate. The product spontaneously undergoes cyclization to form 1-pyrroline-5-carboxylate. The polypeptide is Gamma-glutamyl phosphate reductase (Serratia marcescens).